We begin with the raw amino-acid sequence, 603 residues long: Linalool synthase Tps-5031L19, chloroplastic (603 aa).

The transit peptide at Met1–Ser36 directs the protein to the chloroplast. Residues Arg322, Asp359, Asp363, Arg500, and Asp503 each coordinate (2E)-geranyl diphosphate. Asp359 and Asp363 together coordinate Mg(2+). The DDXXD motif signature appears at Asp359–Asp363. Residues Asp503, Thr507, and Glu511 each contribute to the Mg(2+) site.

Belongs to the terpene synthase family. Tpsb subfamily. As to quaternary structure, monomer. It depends on Mg(2+) as a cofactor. The cofactor is Mn(2+).

It is found in the plastid. Its subcellular location is the chloroplast. The enzyme catalyses (2E)-geranyl diphosphate + H2O = linalool + diphosphate. The protein operates within secondary metabolite biosynthesis; terpenoid biosynthesis. Functionally, monoterpene synthase (mono-TPS) involved in the biosynthesis of monoterpenes natural products. Catalyzes the conversion of (2E)-geranyl diphosphate (GPP) into linalool. The sequence is that of Linalool synthase Tps-5031L19, chloroplastic from Perilla frutescens var. hirtella (Perilla citriodora).